The sequence spans 355 residues: Peptide chain release factor 1 (355 aa).

Gln233 bears the N5-methylglutamine mark.

The protein belongs to the prokaryotic/mitochondrial release factor family. Methylated by PrmC. Methylation increases the termination efficiency of RF1.

Its subcellular location is the cytoplasm. Functionally, peptide chain release factor 1 directs the termination of translation in response to the peptide chain termination codons UAG and UAA. This chain is Peptide chain release factor 1, found in Caldicellulosiruptor saccharolyticus (strain ATCC 43494 / DSM 8903 / Tp8T 6331).